Consider the following 319-residue polypeptide: HPr kinase/phosphorylase (319 aa).

Residues histidine 141 and lysine 162 contribute to the active site. Position 156–163 (156–163) interacts with ATP; that stretch reads GNSGVGKS. Serine 163 contacts Mg(2+). Aspartate 180 serves as the catalytic Proton acceptor; for phosphorylation activity. Proton donor; for dephosphorylation activity. The interval 204–213 is important for the catalytic mechanism of both phosphorylation and dephosphorylation; sequence MEIRGIGIID. Glutamate 205 contributes to the Mg(2+) binding site. Arginine 246 is an active-site residue. Residues 267–272 form an important for the catalytic mechanism of dephosphorylation region; it reads PVKVGR.

It belongs to the HPrK/P family. Homohexamer. Mg(2+) serves as cofactor.

It carries out the reaction [HPr protein]-L-serine + ATP = [HPr protein]-O-phospho-L-serine + ADP + H(+). The catalysed reaction is [HPr protein]-O-phospho-L-serine + phosphate + H(+) = [HPr protein]-L-serine + diphosphate. Its function is as follows. Catalyzes the ATP- as well as the pyrophosphate-dependent phosphorylation of a specific serine residue in HPr, a phosphocarrier protein of the phosphoenolpyruvate-dependent sugar phosphotransferase system (PTS). HprK/P also catalyzes the pyrophosphate-producing, inorganic phosphate-dependent dephosphorylation (phosphorolysis) of seryl-phosphorylated HPr (P-Ser-HPr). The two antagonistic activities of HprK/P are regulated by several intracellular metabolites, which change their concentration in response to the absence or presence of rapidly metabolisable carbon sources (glucose, fructose, etc.) in the growth medium. Therefore, by controlling the phosphorylation state of HPr, HPrK/P is a sensor enzyme that plays a major role in the regulation of carbon metabolism and sugar transport: it mediates carbon catabolite repression (CCR), and regulates PTS-catalyzed carbohydrate uptake and inducer exclusion. This chain is HPr kinase/phosphorylase, found in Lactobacillus gasseri (strain ATCC 33323 / DSM 20243 / BCRC 14619 / CIP 102991 / JCM 1131 / KCTC 3163 / NCIMB 11718 / NCTC 13722 / AM63).